A 464-amino-acid polypeptide reads, in one-letter code: 3-deoxy-D-manno-octulosonic acid transferase (464 aa).

A helical; Signal-anchor membrane pass occupies residues 2 to 22; sequence MLLYYALSFILLPIYFIIILI. Positions 47–93 constitute an RPE1 insert domain; it reads YSLDFLHNEANKERFKGDTERRTAAYTSVREDSSTGSTSKLPLEASY. Glutamate 107 serves as the catalytic Proton acceptor. CMP-binding positions include 311 to 312, 352 to 354, and 377 to 380; these read PR, FGE, and NILE.

Belongs to the glycosyltransferase group 1 family.

The protein localises to the cell inner membrane. The enzyme catalyses lipid IVA (E. coli) + CMP-3-deoxy-beta-D-manno-octulosonate = alpha-Kdo-(2-&gt;6)-lipid IVA (E. coli) + CMP + H(+). It functions in the pathway bacterial outer membrane biogenesis; LPS core biosynthesis. Its function is as follows. Involved in lipopolysaccharide (LPS) biosynthesis. Catalyzes the transfer of 3-deoxy-D-manno-octulosonate (Kdo) residue(s) from CMP-Kdo to lipid IV(A), the tetraacyldisaccharide-1,4'-bisphosphate precursor of lipid A. This is 3-deoxy-D-manno-octulosonic acid transferase (waaA) from Rickettsia felis (strain ATCC VR-1525 / URRWXCal2) (Rickettsia azadi).